Consider the following 541-residue polypeptide: Zinc finger protein 655 (541 aa).

The tract at residues Met-1 to Asn-22 is disordered. C2H2-type zinc fingers lie at residues Tyr-243–His-265, Tyr-271–His-293, Tyr-334–His-356, Cys-361–His-383, Tyr-411–His-433, and His-439–His-461. A C2H2-type 7; degenerate zinc finger spans residues Phe-495 to His-517.

It belongs to the krueppel C2H2-type zinc-finger protein family. As to quaternary structure, interacts with VAV1 and CDK4. Interacts with INTS13; promoting association with the integrator complex.

It is found in the nucleus. Probable transcription factor. This is Zinc finger protein 655 (Znf655) from Mus musculus (Mouse).